A 318-amino-acid chain; its full sequence is MEWENHTILVEFFLKGLSGHPRLELLFFVLIFIMYVVILLGNGTLILISILDPHLHTPMYFFLGNLSFLDICYTTTSIPSTLVSFLSERKTISLSGCAVQMFLSLAMGTTECVLLGVMAFDRYVAICNPLRYPIIMSKDAYVPMAAGSWIIGAVNSAVQTVFVVQLPFCRNNIINHFTCEILAVMKLACADISGNEFILLVTTTLFLLTPLLLIIVSYTLIILSIFKISSSEGRSKPSSTCSARLTVVITFCGTIFLMYMKPKSQETLNSDDLDATDKLIFIFYRVMTPMMNPLIYSLRNKDVKEAVKHLLRRKNFNK.

Over 1-25 (MEWENHTILVEFFLKGLSGHPRLEL) the chain is Extracellular. An N-linked (GlcNAc...) asparagine glycan is attached at Asn5. The helical transmembrane segment at 26-46 (LFFVLIFIMYVVILLGNGTLI) threads the bilayer. Residues 47–54 (LISILDPH) are Cytoplasmic-facing. Residues 55–75 (LHTPMYFFLGNLSFLDICYTT) traverse the membrane as a helical segment. The Extracellular portion of the chain corresponds to 76 to 99 (TSIPSTLVSFLSERKTISLSGCAV). Residues Cys97 and Cys189 are joined by a disulfide bond. The chain crosses the membrane as a helical span at residues 100-120 (QMFLSLAMGTTECVLLGVMAF). Over 121-139 (DRYVAICNPLRYPIIMSKD) the chain is Cytoplasmic. Residues 140–160 (AYVPMAAGSWIIGAVNSAVQT) form a helical membrane-spanning segment. At 161–197 (VFVVQLPFCRNNIINHFTCEILAVMKLACADISGNEF) the chain is on the extracellular side. A helical membrane pass occupies residues 198–217 (ILLVTTTLFLLTPLLLIIVS). Residues 218–237 (YTLIILSIFKISSSEGRSKP) are Cytoplasmic-facing. The helical transmembrane segment at 238–258 (SSTCSARLTVVITFCGTIFLM) threads the bilayer. Residues 259–277 (YMKPKSQETLNSDDLDATD) are Extracellular-facing. The chain crosses the membrane as a helical span at residues 278 to 298 (KLIFIFYRVMTPMMNPLIYSL). Topologically, residues 299-318 (RNKDVKEAVKHLLRRKNFNK) are cytoplasmic.

It belongs to the G-protein coupled receptor 1 family.

The protein resides in the cell membrane. Odorant receptor. The sequence is that of Olfactory receptor 13C5 (OR13C5) from Homo sapiens (Human).